A 306-amino-acid polypeptide reads, in one-letter code: Agmatinase (306 aa).

The Mn(2+) site is built by His126, Asp149, His151, Asp153, Asp230, and Asp232.

This sequence belongs to the arginase family. Agmatinase subfamily. It depends on Mn(2+) as a cofactor.

It catalyses the reaction agmatine + H2O = urea + putrescine. It participates in amine and polyamine biosynthesis; putrescine biosynthesis via agmatine pathway; putrescine from agmatine: step 1/1. Catalyzes the formation of putrescine from agmatine. The polypeptide is Agmatinase (Escherichia coli O9:H4 (strain HS)).